We begin with the raw amino-acid sequence, 372 residues long: 3-isopropylmalate dehydrogenase (372 aa).

Residue 79–90 (GPKWQGGAVRPE) participates in NAD(+) binding. Substrate-binding residues include Arg97, Arg107, Arg136, and Asp225. 3 residues coordinate Mg(2+): Asp225, Asp250, and Asp254. 289–300 (GSAPDLPAGKAN) is an NAD(+) binding site.

Belongs to the isocitrate and isopropylmalate dehydrogenases family. Homodimer. It depends on Mg(2+) as a cofactor. Mn(2+) serves as cofactor.

The protein resides in the cytoplasm. The catalysed reaction is (2R,3S)-3-isopropylmalate + NAD(+) = 4-methyl-2-oxopentanoate + CO2 + NADH. The protein operates within amino-acid biosynthesis; L-leucine biosynthesis; L-leucine from 3-methyl-2-oxobutanoate: step 3/4. Catalyzes the oxidation of 3-carboxy-2-hydroxy-4-methylpentanoate (3-isopropylmalate) to 3-carboxy-4-methyl-2-oxopentanoate. The product decarboxylates to 4-methyl-2 oxopentanoate. The protein is 3-isopropylmalate dehydrogenase (LEU2) of Eremothecium gossypii (strain ATCC 10895 / CBS 109.51 / FGSC 9923 / NRRL Y-1056) (Yeast).